Here is a 137-residue protein sequence, read N- to C-terminus: Peptide methionine sulfoxide reductase MsrB (137 aa).

Positions 7–129 (AEELKKKLSE…NSASLAFSDE (123 aa)) constitute a MsrB domain. C46, C49, C95, and C98 together coordinate Zn(2+). The active-site Nucleophile is the C118.

The protein belongs to the MsrB Met sulfoxide reductase family. It depends on Zn(2+) as a cofactor.

The catalysed reaction is L-methionyl-[protein] + [thioredoxin]-disulfide + H2O = L-methionyl-(R)-S-oxide-[protein] + [thioredoxin]-dithiol. The sequence is that of Peptide methionine sulfoxide reductase MsrB from Salmonella agona (strain SL483).